The chain runs to 178 residues: Adenine phosphoribosyltransferase (178 aa).

The protein belongs to the purine/pyrimidine phosphoribosyltransferase family. Homodimer.

It is found in the cytoplasm. It carries out the reaction AMP + diphosphate = 5-phospho-alpha-D-ribose 1-diphosphate + adenine. The protein operates within purine metabolism; AMP biosynthesis via salvage pathway; AMP from adenine: step 1/1. Its function is as follows. Catalyzes a salvage reaction resulting in the formation of AMP, that is energically less costly than de novo synthesis. In Bacteroides fragilis (strain YCH46), this protein is Adenine phosphoribosyltransferase.